Reading from the N-terminus, the 241-residue chain is Probable transcriptional regulatory protein LMOf2365_1554 (241 aa).

The span at 1 to 14 (MSGHSKWNNIQGRK) shows a compositional bias: polar residues. The tract at residues 1-22 (MSGHSKWNNIQGRKNAQDSKRS) is disordered.

Belongs to the TACO1 family.

The protein resides in the cytoplasm. The sequence is that of Probable transcriptional regulatory protein LMOf2365_1554 from Listeria monocytogenes serotype 4b (strain F2365).